The sequence spans 383 residues: F-box/kelch-repeat protein At2g22030 (383 aa).

An F-box domain is found at 23-71; it reads SLLFSSLPYDVVLNCLARVSRRYYPNLSCVSKSFQSLVRSPELAHMRSL. 3 Kelch repeats span residues 130 to 175, 176 to 220, and 269 to 317; these read KIYF…VVNG, KLYV…LMRY, and GVCV…GMVD.

This is F-box/kelch-repeat protein At2g22030 from Arabidopsis thaliana (Mouse-ear cress).